A 71-amino-acid chain; its full sequence is DNA-directed RNA polymerase subunit omega (71 aa).

The protein belongs to the RNA polymerase subunit omega family. As to quaternary structure, the RNAP catalytic core consists of 2 alpha, 1 beta, 1 beta' and 1 omega subunit. When a sigma factor is associated with the core the holoenzyme is formed, which can initiate transcription.

It catalyses the reaction RNA(n) + a ribonucleoside 5'-triphosphate = RNA(n+1) + diphosphate. Functionally, promotes RNA polymerase assembly. Latches the N- and C-terminal regions of the beta' subunit thereby facilitating its interaction with the beta and alpha subunits. This chain is DNA-directed RNA polymerase subunit omega, found in Campylobacter concisus (strain 13826).